The sequence spans 233 residues: Large ribosomal subunit protein uL1 (233 aa).

It belongs to the universal ribosomal protein uL1 family. In terms of assembly, part of the 50S ribosomal subunit.

Functionally, binds directly to 23S rRNA. The L1 stalk is quite mobile in the ribosome, and is involved in E site tRNA release. In terms of biological role, protein L1 is also a translational repressor protein, it controls the translation of the L11 operon by binding to its mRNA. The polypeptide is Large ribosomal subunit protein uL1 (Shewanella sp. (strain MR-4)).